We begin with the raw amino-acid sequence, 264 residues long: S-adenosylmethionine decarboxylase proenzyme (264 aa).

The active-site Schiff-base intermediate with substrate; via pyruvic acid is the serine 112. Residue serine 112 is modified to Pyruvic acid (Ser); by autocatalysis. The active-site Proton acceptor; for processing activity is histidine 117. Catalysis depends on cysteine 140, which acts as the Proton donor; for catalytic activity.

It belongs to the prokaryotic AdoMetDC family. Type 2 subfamily. Heterooctamer of four alpha and four beta chains arranged as a tetramer of alpha/beta heterodimers. Pyruvate serves as cofactor. Post-translationally, is synthesized initially as an inactive proenzyme. Formation of the active enzyme involves a self-maturation process in which the active site pyruvoyl group is generated from an internal serine residue via an autocatalytic post-translational modification. Two non-identical subunits are generated from the proenzyme in this reaction, and the pyruvate is formed at the N-terminus of the alpha chain, which is derived from the carboxyl end of the proenzyme. The post-translation cleavage follows an unusual pathway, termed non-hydrolytic serinolysis, in which the side chain hydroxyl group of the serine supplies its oxygen atom to form the C-terminus of the beta chain, while the remainder of the serine residue undergoes an oxidative deamination to produce ammonia and the pyruvoyl group blocking the N-terminus of the alpha chain.

It carries out the reaction S-adenosyl-L-methionine + H(+) = S-adenosyl 3-(methylsulfanyl)propylamine + CO2. It participates in amine and polyamine biosynthesis; S-adenosylmethioninamine biosynthesis; S-adenosylmethioninamine from S-adenosyl-L-methionine: step 1/1. Its function is as follows. Catalyzes the decarboxylation of S-adenosylmethionine to S-adenosylmethioninamine (dcAdoMet), the propylamine donor required for the synthesis of the polyamines spermine and spermidine from the diamine putrescine. The sequence is that of S-adenosylmethionine decarboxylase proenzyme from Pectobacterium atrosepticum (strain SCRI 1043 / ATCC BAA-672) (Erwinia carotovora subsp. atroseptica).